We begin with the raw amino-acid sequence, 261 residues long: Ice-binding protein (261 aa).

An N-terminal signal peptide occupies residues 1 to 20 (MSLLSIITIGLAGLGGLVNG). The N-linked (GlcNAc...) asparagine glycan is linked to N185.

Belongs to the ice-binding protein family. Homodimer. Dimerization is not required for the thermal hysteresis (TH) activity. Glycosylated. Glycosylation is not required for the thermal hysteresis (TH) activity. Glycosylation may increase stability and secretion of this protein.

It localises to the secreted. Confers freeze tolerance. Binds to the surface of ice crystals and inhibits their growth. Has low thermal hysteresis (TH) activity, which is the ability to lower the freezing point of an aqueous solution below its melting point. The TH activity of this protein is approximately 0.2 degrees Celsius at 50 uM and 0.3 degrees Celsius at 400 uM. The protein is Ice-binding protein of Leucosporidium sp. (strain AY30) (Arctic yeast).